The chain runs to 354 residues: Methionine import ATP-binding protein MetN (354 aa).

An ABC transporter domain is found at 8–250 (LDHIDITFRQ…PKEALTQKFI (243 aa)). Residue 42–49 (GYSGAGKS) participates in ATP binding.

This sequence belongs to the ABC transporter superfamily. Methionine importer (TC 3.A.1.24) family. The complex is composed of two ATP-binding proteins (MetN), two transmembrane proteins (MetI) and a solute-binding protein (MetQ).

Its subcellular location is the cell membrane. The catalysed reaction is L-methionine(out) + ATP + H2O = L-methionine(in) + ADP + phosphate + H(+). It carries out the reaction D-methionine(out) + ATP + H2O = D-methionine(in) + ADP + phosphate + H(+). Its function is as follows. Part of the ABC transporter complex MetNIQ involved in methionine import. Responsible for energy coupling to the transport system. In Streptococcus pyogenes serotype M18 (strain MGAS8232), this protein is Methionine import ATP-binding protein MetN.